Here is a 250-residue protein sequence, read N- to C-terminus: Probable transcriptional regulatory protein Mkms_2298 (250 aa).

Belongs to the TACO1 family.

The protein resides in the cytoplasm. In Mycobacterium sp. (strain KMS), this protein is Probable transcriptional regulatory protein Mkms_2298.